The primary structure comprises 330 residues: Beta-ketoacyl-[acyl-carrier-protein] synthase III 2 (330 aa).

Active-site residues include Cys118 and His246. Residues 247–251 (QANLR) form an ACP-binding region. Asn276 is a catalytic residue.

The protein belongs to the thiolase-like superfamily. FabH family. In terms of assembly, homodimer.

The protein resides in the cytoplasm. It catalyses the reaction malonyl-[ACP] + acetyl-CoA + H(+) = 3-oxobutanoyl-[ACP] + CO2 + CoA. Its pathway is lipid metabolism; fatty acid biosynthesis. Functionally, catalyzes the condensation reaction of fatty acid synthesis by the addition to an acyl acceptor of two carbons from malonyl-ACP. Catalyzes the first condensation reaction which initiates fatty acid synthesis and may therefore play a role in governing the total rate of fatty acid production. Possesses both acetoacetyl-ACP synthase and acetyl transacylase activities. Its substrate specificity determines the biosynthesis of branched-chain and/or straight-chain of fatty acids. This is Beta-ketoacyl-[acyl-carrier-protein] synthase III 2 from Streptomyces coelicolor (strain ATCC BAA-471 / A3(2) / M145).